A 705-amino-acid polypeptide reads, in one-letter code: Lethal(3)malignant brain tumor-like protein 2 (705 aa).

A disordered region spans residues 1–84 (MEKPRSIEET…GTPRSLDGSG (84 aa)). Ser13 carries the post-translational modification Phosphoserine. The span at 15–25 (PMEEEEDDDLE) shows a compositional bias: acidic residues. Residues 38–49 (SSVGSESSSYLE) are compositionally biased toward low complexity. Residues 50-60 (ESSEAENEDRE) show a composition bias toward acidic residues. A Phosphoserine modification is found at Ser67. The residue at position 76 (Thr76) is a Phosphothreonine. The FCS-type zinc-finger motif lies at 81 to 116 (DGSGSEPAVCEMCGIVGTREAFFSKTKRFCSVSCSR). Positions 90, 93, 110, and 114 each coordinate Zn(2+). 4 MBT repeats span residues 179-283 (FDWG…LVPP), 291-391 (TDWK…IKMS), 397-500 (MAHH…LTPP), and 508-604 (FNWE…LQPP). Phosphoserine is present on Ser338. A Glycyl lysine isopeptide (Lys-Gly) (interchain with G-Cter in SUMO2) cross-link involves residue Lys405. Residues 608-665 (EPATPLKAKEATKKKKKQFGKKRKRIPPTKTRPLRQGSKKPLLEDDPQGARKISSEPV) form a disordered region. A compositionally biased stretch (basic residues) spans 619 to 634 (TKKKKKQFGKKRKRIP). Residues Lys647, Lys659, and Lys675 each participate in a glycyl lysine isopeptide (Lys-Gly) (interchain with G-Cter in SUMO2) cross-link. A disordered region spans residues 680–705 (DVASPDKASSPELPVSVENIKQETDD). A phosphoserine mark is found at Ser683, Ser688, and Ser689. A Glycyl lysine isopeptide (Lys-Gly) (interchain with G-Cter in SUMO1); alternate cross-link involves residue Lys700. Residue Lys700 forms a Glycyl lysine isopeptide (Lys-Gly) (interchain with G-Cter in SUMO2); alternate linkage.

As to quaternary structure, part of the E2F6.com-1 complex in G0 phase composed of E2F6, MGA, MAX, TFDP1, CBX3, BAT8, EUHMTASE1, RING1, RNF2, MBLR, BAT8 and YAF2.

It localises to the nucleus. In terms of biological role, putative Polycomb group (PcG) protein. PcG proteins maintain the transcriptionally repressive state of genes, probably via a modification of chromatin, rendering it heritably changed in its expressibility. Its association with a chromatin-remodeling complex suggests that it may contribute to prevent expression of genes that trigger the cell into mitosis. Binds to monomethylated and dimethylated 'Lys-20' on histone H4. Binds histone H3 peptides that are monomethylated or dimethylated on 'Lys-4', 'Lys-9' or 'Lys-27'. This chain is Lethal(3)malignant brain tumor-like protein 2 (L3MBTL2), found in Homo sapiens (Human).